Here is a 273-residue protein sequence, read N- to C-terminus: MNKYFTCYVVASLFFSGCTVQHNLINETQSQIVQGHNQVIHQYFDEKNTSGVLVIQTDKKINLYGNALSRANTEYVPASTFKMLNALIGLENQKTDINEIFKWKGEKRSFTTWEKDMTLGEAMKLSAVPVYQELARRIGLDLMQKEVERIDFGNAEIGQQVDNFWLIGPLKVTPIQEVEFVSQLAHTQLPFSEKVQANVKNMLLLEENNGYKIFGKTGWAMDIKPQVGWLTGWVEQPDGKIVAFALNMEMRSEMPASIRNELLMKSLKQLNII.

Residues 1-17 (MNKYFTCYVVASLFFSG) form the signal peptide. Cys-18 carries the N-palmitoyl cysteine lipid modification. Residue Cys-18 is the site of S-diacylglycerol cysteine attachment. Ser-79 serves as the catalytic Acyl-ester intermediate. Lys-82 carries the post-translational modification N6-carboxylysine. 216–218 (KTG) contributes to the substrate binding site.

The protein belongs to the class-D beta-lactamase family.

It localises to the cell membrane. The catalysed reaction is a beta-lactam + H2O = a substituted beta-amino acid. Catalyzes the hydrolysis of beta-lactam antibiotics. The protein is Beta-lactamase OXA-133 of Acinetobacter radioresistens.